The following is a 194-amino-acid chain: HTH-type transcriptional regulator BetI (194 aa).

Positions 8–68 (EIRRAQLIDA…ATMRHVLRDL (61 aa)) constitute an HTH tetR-type domain. Positions 31–50 (TLASVAQRANISTGIVSHYF) form a DNA-binding region, H-T-H motif.

The protein operates within amine and polyamine biosynthesis; betaine biosynthesis via choline pathway [regulation]. Its function is as follows. Repressor involved in the biosynthesis of the osmoprotectant glycine betaine. It represses transcription of the choline transporter BetT and the genes of BetAB involved in the synthesis of glycine betaine. This is HTH-type transcriptional regulator BetI from Burkholderia cenocepacia (strain HI2424).